Here is a 339-residue protein sequence, read N- to C-terminus: MIDQKIFETTLNIDDPTNFCTNVEAHLLKELENIYVGKCFKNSFILNITGIIQRSPCFIMRTNNSGRGYMHVRFSALVSYLNAFDLIAAVKIIKNDSNIILGESLLTEPVTIVIPSSESQNNVAEVGQIVPVQLANSSVYYIPGRQQASATGSIFIPKHTFSVYHVQEELTQEQALNLTKLVNIIEMLLESRSKKDFKQICFFEKLYYTYSISSDEILDLKIWKGPKGKEMSRLKPCNVLSFLYDALKNKSSSLGFWARPPNLFKSSPLAYQQDQNSFNATELPIICSAEVMFVTLLKEIINYLQFMNDLCDTFNNEQLIKRHENIWMLIEQRKIGHDF.

It belongs to the asfivirus D339L family. In terms of assembly, part of the viral DNA-directed RNA polymerase that consists of 8 polII-like subunits (RPB1, RPB2, RPB3, RPB5, RPB6, RPB7, RPB9, RPB10), a capping enzyme and a termination factor.

Its subcellular location is the host cytoplasm. It is found in the virion. In terms of biological role, component of the DNA-directed RNA polymerase (RNAP) that catalyzes the transcription in the cytoplasm of viral DNA into RNA using the four ribonucleoside triphosphates as substrates. The chain is DNA-directed RNA polymerase RPB7 homolog from Ornithodoros (relapsing fever ticks).